An 89-amino-acid polypeptide reads, in one-letter code: Putative membrane protein insertion efficiency factor (89 aa).

The protein belongs to the UPF0161 family.

The protein localises to the cell membrane. Functionally, could be involved in insertion of integral membrane proteins into the membrane. The chain is Putative membrane protein insertion efficiency factor from Exiguobacterium sp. (strain ATCC BAA-1283 / AT1b).